We begin with the raw amino-acid sequence, 857 residues long: Dimethylglycine dehydrogenase, mitochondrial (857 aa).

The transit peptide at 1–43 (MLRLGALRLRGLALRSSQGRPSSAGLREGQESPPSPPEWKDRA) directs the protein to the mitochondrion. The segment at 15–39 (RSSQGRPSSAGLREGQESPPSPPEW) is disordered. Residues 52 to 53 (CV), 73 to 74 (EK), and 80 to 88 (GSTWHAAGL) each bind FAD. H84 carries the post-translational modification Tele-8alpha-FAD histidine. Position 107 is an N6-acetyllysine (K107). K141 bears the N6-acetyllysine; alternate mark. N6-succinyllysine; alternate is present on K141. N6-acetyllysine is present on K161. V212 is a binding site for FAD. The residue at position 216 (K216) is an N6-acetyllysine. Position 244 (W244) interacts with FAD. Residues K310 and K312 each carry the N6-succinyllysine modification. An N6-acetyllysine mark is found at K328 and K353. Residue 390 to 395 (FGYGII) participates in FAD binding. N6-acetyllysine; alternate is present on residues K427, K469, and K516. N6-succinyllysine; alternate occurs at positions 427, 469, and 516. 573–575 (ELT) serves as a coordination point for (6S)-5,6,7,8-tetrahydrofolate. The residue at position 648 (K648) is an N6-acetyllysine; alternate. Residue K648 is modified to N6-succinyllysine; alternate. (6S)-5,6,7,8-tetrahydrofolate contacts are provided by residues Y669, 676 to 678 (ELY), and Y737. K757 bears the N6-acetyllysine mark. K786 carries the N6-acetyllysine; alternate modification. K786 is subject to N6-succinyllysine; alternate. Residue K788 is modified to N6-succinyllysine.

Belongs to the GcvT family. The cofactor is FAD.

Its subcellular location is the mitochondrion. It carries out the reaction (6S)-5,6,7,8-tetrahydrofolyl-(gamma-L-Glu)(n) + N,N-dimethylglycine + oxidized [electron-transfer flavoprotein] + H(+) = (6R)-5,10-methylenetetrahydrofolyl-(gamma-L-Glu)(n) + sarcosine + reduced [electron-transfer flavoprotein]. It participates in amine and polyamine degradation; betaine degradation; sarcosine from betaine: step 2/2. Functionally, catalyzes the demethylation of N,N-dimethylglycine to sarcosine. Also has activity with sarcosine in vitro. This is Dimethylglycine dehydrogenase, mitochondrial (Dmgdh) from Rattus norvegicus (Rat).